We begin with the raw amino-acid sequence, 420 residues long: L-rhamnose isomerase (420 aa).

Residues His264, Asp296, and Asp298 each contribute to the Mn(2+) site.

This sequence belongs to the rhamnose isomerase family. Mn(2+) serves as cofactor.

The protein resides in the cytoplasm. It carries out the reaction L-rhamnopyranose = L-rhamnulose. It participates in carbohydrate degradation; L-rhamnose degradation; glycerone phosphate from L-rhamnose: step 1/3. Catalyzes the interconversion of L-rhamnose and L-rhamnulose. The sequence is that of L-rhamnose isomerase from Listeria innocua serovar 6a (strain ATCC BAA-680 / CLIP 11262).